The sequence spans 97 residues: Aspartyl/glutamyl-tRNA(Asn/Gln) amidotransferase subunit C (97 aa).

Belongs to the GatC family. In terms of assembly, heterotrimer of A, B and C subunits.

It carries out the reaction L-glutamyl-tRNA(Gln) + L-glutamine + ATP + H2O = L-glutaminyl-tRNA(Gln) + L-glutamate + ADP + phosphate + H(+). It catalyses the reaction L-aspartyl-tRNA(Asn) + L-glutamine + ATP + H2O = L-asparaginyl-tRNA(Asn) + L-glutamate + ADP + phosphate + 2 H(+). Functionally, allows the formation of correctly charged Asn-tRNA(Asn) or Gln-tRNA(Gln) through the transamidation of misacylated Asp-tRNA(Asn) or Glu-tRNA(Gln) in organisms which lack either or both of asparaginyl-tRNA or glutaminyl-tRNA synthetases. The reaction takes place in the presence of glutamine and ATP through an activated phospho-Asp-tRNA(Asn) or phospho-Glu-tRNA(Gln). This chain is Aspartyl/glutamyl-tRNA(Asn/Gln) amidotransferase subunit C, found in Clostridium botulinum (strain Eklund 17B / Type B).